The sequence spans 554 residues: 3-(3-hydroxy-phenyl)propionate/3-hydroxycinnamic acid hydroxylase (554 aa).

FAD-binding positions include 17 to 46 (QVAIAGAGPVGLMMANYLGQMGIDVLVVEK) and 285 to 295 (FRIDRVLLAGD).

Belongs to the PheA/TfdB FAD monooxygenase family. It depends on FAD as a cofactor.

The catalysed reaction is 3-(3-hydroxyphenyl)propanoate + NADH + O2 + H(+) = 3-(2,3-dihydroxyphenyl)propanoate + NAD(+) + H2O. It catalyses the reaction (2E)-3-(3-hydroxyphenyl)prop-2-enoate + NADH + O2 + H(+) = (2E)-3-(2,3-dihydroxyphenyl)prop-2-enoate + NAD(+) + H2O. Its pathway is aromatic compound metabolism; 3-phenylpropanoate degradation. Catalyzes the insertion of one atom of molecular oxygen into position 2 of the phenyl ring of 3-(3-hydroxyphenyl)propionate (3-HPP) and hydroxycinnamic acid (3HCI). The sequence is that of 3-(3-hydroxy-phenyl)propionate/3-hydroxycinnamic acid hydroxylase from Escherichia coli O17:K52:H18 (strain UMN026 / ExPEC).